The chain runs to 1030 residues: Germ cell nuclear acidic protein (1030 aa).

6 disordered regions span residues 1–59 (MADH…TEDT), 196–245 (EWNG…TQLA), 266–361 (KRLA…VSSI), 375–433 (TMES…EQFL), 457–594 (LKRS…DLTY), and 699–764 (KLGI…PVAS). The segment covering 20–33 (APKDHPEKRNDQKT) has biased composition (basic and acidic residues). Polar residues-rich tracts occupy residues 298–316 (EPNTLCSDSSETHNSTIHN) and 329–349 (ETSSEGELTPQKASSGSSTSG). The span at 505-516 (LRTNQTPLNSTR) shows a compositional bias: polar residues. Composition is skewed to basic and acidic residues over residues 541–553 (NHIDEDRWRKLID) and 578–594 (DSDKDKENKQKRGDLTY). A compositionally biased stretch (low complexity) spans 720 to 748 (TPKTAPPKGTAPPKTSAPPKVSTPPKSTK).

This sequence belongs to the serine-aspartate repeat-containing protein (SDr) family.

It localises to the cytoplasm. The protein localises to the chromosome. In terms of biological role, may play a role in DNA-protein cross-links (DPCs) clearance, ensuring the genomic stability by protecting germ cells and early embryos from various sources of damage. Limits replication stress and DNA double-strand breaks. This Drosophila melanogaster (Fruit fly) protein is Germ cell nuclear acidic protein.